Consider the following 334-residue polypeptide: Ornithine carbamoyltransferase (334 aa).

Residues 56–59, Gln-83, Arg-107, and 134–137 contribute to the carbamoyl phosphate site; these read STRT and HPTQ. Residues Asn-168, Asp-232, and 236–237 each bind L-ornithine; that span reads SM. Residues 274 to 275 and Arg-320 contribute to the carbamoyl phosphate site; that span reads CL.

This sequence belongs to the aspartate/ornithine carbamoyltransferase superfamily. OTCase family.

The protein localises to the cytoplasm. The catalysed reaction is carbamoyl phosphate + L-ornithine = L-citrulline + phosphate + H(+). The protein operates within amino-acid biosynthesis; L-arginine biosynthesis; L-arginine from L-ornithine and carbamoyl phosphate: step 1/3. In terms of biological role, reversibly catalyzes the transfer of the carbamoyl group from carbamoyl phosphate (CP) to the N(epsilon) atom of ornithine (ORN) to produce L-citrulline. This Shigella sonnei (strain Ss046) protein is Ornithine carbamoyltransferase.